We begin with the raw amino-acid sequence, 244 residues long: Small ribosomal subunit protein eS4 (244 aa).

Residues 43-108 form the S4 RNA-binding domain; sequence LPLLLIVRDI…NYRVLFDRKG (66 aa).

Belongs to the eukaryotic ribosomal protein eS4 family.

This Methanocaldococcus jannaschii (strain ATCC 43067 / DSM 2661 / JAL-1 / JCM 10045 / NBRC 100440) (Methanococcus jannaschii) protein is Small ribosomal subunit protein eS4 (rps4e).